The chain runs to 906 residues: Protein translocase subunit SecA (906 aa).

Residues Q87, 105–109 (GEGKT), and D507 contribute to the ATP site. Positions 553 to 563 (RHESRRIDNQL) are enriched in basic and acidic residues. Disordered stretches follow at residues 553 to 576 (RHES…PGSS) and 854 to 906 (LEEP…GRLA). 4 residues coordinate Zn(2+): C890, C892, C901, and H902. A compositionally biased stretch (basic residues) spans 896 to 906 (KKYKQCHGRLA).

Belongs to the SecA family. In terms of assembly, monomer and homodimer. Part of the essential Sec protein translocation apparatus which comprises SecA, SecYEG and auxiliary proteins SecDF-YajC and YidC. The cofactor is Zn(2+).

It is found in the cell inner membrane. The protein localises to the cytoplasm. It carries out the reaction ATP + H2O + cellular proteinSide 1 = ADP + phosphate + cellular proteinSide 2.. Its function is as follows. Part of the Sec protein translocase complex. Interacts with the SecYEG preprotein conducting channel. Has a central role in coupling the hydrolysis of ATP to the transfer of proteins into and across the cell membrane, serving both as a receptor for the preprotein-SecB complex and as an ATP-driven molecular motor driving the stepwise translocation of polypeptide chains across the membrane. The polypeptide is Protein translocase subunit SecA (Methylococcus capsulatus (strain ATCC 33009 / NCIMB 11132 / Bath)).